The following is a 556-amino-acid chain: 2-succinyl-5-enolpyruvyl-6-hydroxy-3-cyclohexene-1-carboxylate synthase (556 aa).

The protein belongs to the TPP enzyme family. MenD subfamily. As to quaternary structure, homodimer. The cofactor is Mg(2+). Mn(2+) is required as a cofactor. Thiamine diphosphate serves as cofactor.

The catalysed reaction is isochorismate + 2-oxoglutarate + H(+) = 5-enolpyruvoyl-6-hydroxy-2-succinyl-cyclohex-3-ene-1-carboxylate + CO2. It participates in quinol/quinone metabolism; 1,4-dihydroxy-2-naphthoate biosynthesis; 1,4-dihydroxy-2-naphthoate from chorismate: step 2/7. Its pathway is quinol/quinone metabolism; menaquinone biosynthesis. Functionally, catalyzes the thiamine diphosphate-dependent decarboxylation of 2-oxoglutarate and the subsequent addition of the resulting succinic semialdehyde-thiamine pyrophosphate anion to isochorismate to yield 2-succinyl-5-enolpyruvyl-6-hydroxy-3-cyclohexene-1-carboxylate (SEPHCHC). This is 2-succinyl-5-enolpyruvyl-6-hydroxy-3-cyclohexene-1-carboxylate synthase from Escherichia coli O17:K52:H18 (strain UMN026 / ExPEC).